The following is a 425-amino-acid chain: MRVLGIVVEYNPFHFGHLHHLEEAKKLINPDYVVAVMSGNFCQRGEPAIVNKFARTEIALKNGVDVVFELPVVYAIQDAGGFALGSVGVLDRTGVVTDIVFGSESGDVTFLRKVANLLTNQTPEFEKTFKRHLKMGYSYPNARKYALMDVLSNDVEKLSKSNDILGIEYIKALIKYSSDIQPHVIKRIGADYNDEQFKGKFSSASAVRKAIKENKFEQTKEALPEWTFKILEREFSEGRGPVFLEYFDFVIAMFRKLKREDFERIYSFNEGLDLRFYESARESGNLQDFVERVKAKRFTYSRIRRAIFHVLFDMEKSFVELSNEKGPQYLRVLGFTKRGRELLKAMKKNSKVPIISTASLYRNVLEEAKKKIAEGKVSWEIDESLYIWQFERDLLASDIYTFLYPNKFQRKAGMDFEYKVIEMLG.

ATP contacts are provided by residues Val-7–His-20, Gly-102, Asn-162, and Arg-187–Ile-188.

The protein belongs to the TmcAL family.

It is found in the cytoplasm. It carries out the reaction cytidine(34) in elongator tRNA(Met) + acetate + ATP = N(4)-acetylcytidine(34) in elongator tRNA(Met) + AMP + diphosphate. In terms of biological role, catalyzes the formation of N(4)-acetylcytidine (ac(4)C) at the wobble position of elongator tRNA(Met), using acetate and ATP as substrates. First activates an acetate ion to form acetyladenylate (Ac-AMP) and then transfers the acetyl group to tRNA to form ac(4)C34. This is tRNA(Met) cytidine acetate ligase from Fervidobacterium nodosum (strain ATCC 35602 / DSM 5306 / Rt17-B1).